The following is a 115-amino-acid chain: Large ribosomal subunit protein bL19 (115 aa).

This sequence belongs to the bacterial ribosomal protein bL19 family.

This protein is located at the 30S-50S ribosomal subunit interface and may play a role in the structure and function of the aminoacyl-tRNA binding site. The chain is Large ribosomal subunit protein bL19 from Desulforapulum autotrophicum (strain ATCC 43914 / DSM 3382 / VKM B-1955 / HRM2) (Desulfobacterium autotrophicum).